Here is a 306-residue protein sequence, read N- to C-terminus: MAKSSALPDHLYEQMEVGQRLRNQGYRGRFAPSPTGPLHLGNLCTALVSWLQARLANGAWLLRVDDLDQPRNRVGAVESLQQDLHWLGLEWDGPVVFQSRRRGIYNSFLSALRRQGKLYACRCSRRMLADISAPAGRHLVYPGTCRDLELFWGWHEGRLPSWRLRVSKEFSHTSGDVILRRADGFIAYHLATVVDELTLGISEVVRGEDLLDAMNAQLALINAISERPVIYRHVPLLCDDQGRKLAKREGHAGLDSLRSEGLGPSHVVGWLAASQSLVPFGAELTAGELLSELKKKEGVLKSVLKP.

Residues Arg29–Ser33 and Asp65 each bind L-glutamate. The short motif at Pro32 to Asn42 is the 'HIGH' region element. The Zn(2+) site is built by Cys121, Cys123, Tyr141, and Cys145. The L-glutamate site is built by Tyr188 and Arg206. The short motif at Lys244–Arg248 is the 'KMSKS' region element. ATP is bound at residue Lys247.

This sequence belongs to the class-I aminoacyl-tRNA synthetase family. GluQ subfamily. The cofactor is Zn(2+).

Functionally, catalyzes the tRNA-independent activation of glutamate in presence of ATP and the subsequent transfer of glutamate onto a tRNA(Asp). Glutamate is transferred on the 2-amino-5-(4,5-dihydroxy-2-cyclopenten-1-yl) moiety of the queuosine in the wobble position of the QUC anticodon. This is Glutamyl-Q tRNA(Asp) synthetase from Prochlorococcus marinus (strain MIT 9313).